Consider the following 360-residue polypeptide: Peptide chain release factor 1 (360 aa).

The residue at position 237 (Gln-237) is an N5-methylglutamine.

The protein belongs to the prokaryotic/mitochondrial release factor family. Post-translationally, methylated by PrmC. Methylation increases the termination efficiency of RF1.

The protein resides in the cytoplasm. In terms of biological role, peptide chain release factor 1 directs the termination of translation in response to the peptide chain termination codons UAG and UAA. The protein is Peptide chain release factor 1 of Pseudomonas savastanoi pv. phaseolicola (strain 1448A / Race 6) (Pseudomonas syringae pv. phaseolicola (strain 1448A / Race 6)).